The chain runs to 143 residues: Large ribosomal subunit protein uL11 (143 aa).

This sequence belongs to the universal ribosomal protein uL11 family. Part of the ribosomal stalk of the 50S ribosomal subunit. Interacts with L10 and the large rRNA to form the base of the stalk. L10 forms an elongated spine to which L12 dimers bind in a sequential fashion forming a multimeric L10(L12)X complex. One or more lysine residues are methylated.

Its function is as follows. Forms part of the ribosomal stalk which helps the ribosome interact with GTP-bound translation factors. In Allorhizobium ampelinum (strain ATCC BAA-846 / DSM 112012 / S4) (Agrobacterium vitis (strain S4)), this protein is Large ribosomal subunit protein uL11.